A 610-amino-acid polypeptide reads, in one-letter code: MRYIAGIDIGNSSTEVALATLDEAGALTITHSALAETTGIKGTLRNVFGIQEALALVARGAGIAVSDISLIRINEATPVIGDVAMETITETIITESTMIGHNPKTPGGAGLGTGITITPQELLTRPADAPYILVVSSAFDFADIASVINASLRAGYQITGVILQRDDGVLVSNRLEKPLPIVDEVLYIDRIPLGMLAAIEVAVPGKVIETLSNPYGIATVFNLSPEETKNIVPMARALIGNRSAVVVKTPSGDVKARAIPAGNLELLAQGRSVRVDVAAGAEAIMKAVDGCGRLDNVTGESGTNIGGMLEHVRQTMAELTNKPSSEIFIQDLLAVDTSVPVSVTGGLAGEFSLEQAVGIASMVKSDRLQMAMIAREIEQKLNIDVQIGGAEAEAAILGALTTPGTTRPLAILDLGAGSTDASIINPKGDIIATHLAGAGDMVTMIIARELGLEDRYLAEEIKKYPLAKVESLFHLRHEDGSVQFFSTPLPPAVFARVCVVKADELVPLPGDLALEKVRAIRRSAKERVFVTNALRALRQVSPTGNIRDIPFVVLVGGSSLDFEVPQLVTDALAHYRLVAGRGNIRGSEGPRNAVATGLILSWHKEFAHER.

11–13 (NSS) provides a ligand contact to ATP. Residues Thr105, Asp166, and Asp183 each coordinate Mg(2+). ATP contacts are provided by residues 459–462 (EEIK), 557–558 (GS), and Arg591.

The protein belongs to the DdrA/PduG family. In terms of assembly, component of the DDR complex, a heterotetramer of DdrA(2)/DdrB(2). The DDR complex interacts with the diol dehydratase complex in the presence of ADP but not ATP. Mg(2+) serves as cofactor.

The enzyme catalyses ATP + H2O = ADP + phosphate + H(+). Large subunit of the diol dehydratase-reactivating factor (DDR), which reactivates suicidally inhibited adenosylcobalamin-dependent diol dehydratase (DD, pddA, pddB, pddC). DDR acts as a chaperone, reactivating inactivated DD holoenzyme in the presence of ATP, Mg(2+) and free adenosylcobalamin (AdoCbl), by mediating the exchange of the tightly bound damaged cofactor AdoCbl for a free intact one. Reactivation takes place in two steps: ADP-dependent cobalamin release, then ATP-dependent dissociation of the DD apoenzyme-DDR complex. DDR has weak ATPase activity which is required for DD reactivation. This subunit contains the adenosine nucleotide binding site. Activates glycerol-inactivated, O2-inactivated holoenzyme and inactivated enzyme-cyanocobalamin complex. Also reactivates glycerol-inactivated hologlycerol dehydratase, a DD isozyme. This chain is Diol dehydratase-reactivating factor large subunit, found in Klebsiella michiganensis (strain ATCC 8724 / DSM 4798 / JCM 20051 / NBRC 3318 / NRRL B-199 / KCTC 1686 / BUCSAV 143 / CCM 1901).